The following is a 331-amino-acid chain: Glucan endo-1,3-beta-glucosidase, acidic isoform GL161 (331 aa).

Positions 1 to 9 (MCSIQIIGA) are cleaved as a signal peptide. The residue at position 10 (Gln10) is a Pyrrolidone carboxylic acid. 2 N-linked (GlcNAc...) asparagine glycosylation sites follow: Asn55 and Asn75. Residue Glu244 is the Nucleophile of the active site.

This sequence belongs to the glycosyl hydrolase 17 family. Is expressed primarily in epidermal cell of healthy plant, and following induction by ethylene, accumulates in mesophyll cells.

Its subcellular location is the secreted. The protein resides in the extracellular space. It carries out the reaction Hydrolysis of (1-&gt;3)-beta-D-glucosidic linkages in (1-&gt;3)-beta-D-glucans.. In terms of biological role, is thought to be an important plant defense-related product against fungal pathogens. This Nicotiana tabacum (Common tobacco) protein is Glucan endo-1,3-beta-glucosidase, acidic isoform GL161.